A 311-amino-acid chain; its full sequence is Hevamine-A (311 aa).

The signal sequence occupies residues 1–26 (MAKRTQAILLLLLAISLIMSSSHVDG). Residues 27–302 (GGIAIYWGQN…SSILDSVLFL (276 aa)) enclose the GH18 domain. Cystine bridges form between Cys-46/Cys-93 and Cys-76/Cys-83. Residue Glu-153 is the Proton donor of the active site. A disulfide bridge connects residues Cys-185 and Cys-214. Positions 300-311 (LFLHSEECMTVL) are cleaved as a propeptide — removed in mature form.

Belongs to the glycosyl hydrolase 18 family. Chitinase class II subfamily.

The protein resides in the vacuole. It carries out the reaction Random endo-hydrolysis of N-acetyl-beta-D-glucosaminide (1-&gt;4)-beta-linkages in chitin and chitodextrins.. The catalysed reaction is Hydrolysis of (1-&gt;4)-beta-linkages between N-acetylmuramic acid and N-acetyl-D-glucosamine residues in a peptidoglycan and between N-acetyl-D-glucosamine residues in chitodextrins.. Its function is as follows. Bifunctional enzyme with lysozyme / chitinase activity. May have a role in plugging the latex vessel and cessation of latex flow. The chain is Hevamine-A from Hevea brasiliensis (Para rubber tree).